The primary structure comprises 130 residues: uncharacterized protein (130 aa).

Residues 1–19 form the signal peptide; it reads MKVLGNILWWAFVGFMAYA.

This is an uncharacterized protein from Escherichia coli (strain K12).